The sequence spans 298 residues: Protein BZR1 homolog 1 (298 aa).

Disordered regions lie at residues 1–25 (MTSG…RRER), 71–129 (GTTY…SPSR), 153–175 (VSSS…PKIR), and 190–217 (AVSA…ESDV). The segment at 10–91 (RTPTWKEREN…PSSAGGASVG (82 aa)) is required for DNA-binding. The span at 96-128 (SSTQLLSAPSSSFPSPVPSYHASPASSSFPSPS) shows a compositional bias: low complexity. Serine 156 is subject to Phosphoserine. The interval 204–224 (EHPDTIPECDESDVSTVDSGR) is PEST-like.

It belongs to the BZR/LAT61 family. Interacts with GF14C. Interacts with PUB24. Interacts with SMOS1. In terms of processing, phosphorylated on serine and threonine residues by GSK2. Dephosphorylated during response to brassinosteroid. Ubiquitinated by PUB24. Ubiquitination leads to its subsequent degradation by the 26S proteasome, thus reducing sensitivity to brassinosteroid signaling.

The protein localises to the nucleus. The protein resides in the cytoplasm. Functionally, positive brassinosteroid-signaling protein. Mediates downstream brassinosteroid-regulated growth response and feedback inhibition of brassinosteroid (BR) biosynthetic genes. May act as transcriptional repressor by binding the brassinosteroid-response element (BREE) (5'-CGTG(T/C)G-3') in the promoter of DLT (AC Q9LWU9), another positive regulator of BR signaling. Acts as a transcriptional repressor of LIC, a negative regulator of BR signaling, by binding to the BRRE element of its promoter. BZR1 and LIC play opposite roles in BR signaling and regulation of leaf bending. The chain is Protein BZR1 homolog 1 from Oryza sativa subsp. japonica (Rice).